Here is an 89-residue protein sequence, read N- to C-terminus: Small ribosomal subunit protein uS15 (89 aa).

This sequence belongs to the universal ribosomal protein uS15 family. In terms of assembly, part of the 30S ribosomal subunit. Forms a bridge to the 50S subunit in the 70S ribosome, contacting the 23S rRNA.

One of the primary rRNA binding proteins, it binds directly to 16S rRNA where it helps nucleate assembly of the platform of the 30S subunit by binding and bridging several RNA helices of the 16S rRNA. In terms of biological role, forms an intersubunit bridge (bridge B4) with the 23S rRNA of the 50S subunit in the ribosome. This is Small ribosomal subunit protein uS15 from Lactobacillus gasseri (strain ATCC 33323 / DSM 20243 / BCRC 14619 / CIP 102991 / JCM 1131 / KCTC 3163 / NCIMB 11718 / NCTC 13722 / AM63).